The sequence spans 293 residues: Cell wall protein PGA31 (293 aa).

The signal sequence occupies residues 1 to 18 (MKFLTAASLLTLSSSALA). Asn131 is a glycosylation site (N-linked (GlcNAc...) asparagine). The interval 161–187 (ESASSSSSSAAPEPTASSSEAPKETPV) is disordered. A compositionally biased stretch (low complexity) spans 163–180 (ASSSSSSAAPEPTASSSE). N-linked (GlcNAc...) asparagine glycosylation occurs at Asn190. The segment at 233–262 (VPSKTASSEAAPPKTTVDSVSKPAPSGKKP) is disordered. A lipid anchor (GPI-anchor amidated glycine) is attached at Gly271. The propeptide at 272–293 (AANALTGGSVAIAVAAAIGLVF) is removed in mature form.

The protein belongs to the SRP1/TIP1 family. The GPI-anchor is attached to the protein in the endoplasmic reticulum and serves to target the protein to the cell surface. There, the glucosamine-inositol phospholipid moiety is cleaved off and the GPI-modified mannoprotein is covalently attached via its lipidless GPI glycan remnant to the 1,6-beta-glucan of the outer cell wall layer.

It is found in the secreted. The protein localises to the cell wall. It localises to the membrane. Component of the cell wall involved in virulence which plays a role in the relationship between C.albicans and the host. Involved in the regulation or assembly of chitin within the cell wall. The chain is Cell wall protein PGA31 (PGA31) from Candida albicans (strain SC5314 / ATCC MYA-2876) (Yeast).